Consider the following 274-residue polypeptide: MKKTAIALLAWFVSSASLAATPWQKITHPVPGAAQSIGSFANGCIIGADTLPVQSDNYQVMRTDQRRYFGHPDLVMFIQRLSHQAQQRGLGTVLIGDMGMPAGGRFNGGHASHQTGLDVDIFLQLPKTRWSQAQLLRPQALDLVSRDGKHVVPSRWSSDIASLIKLAAQDNDVTRIFVNPAIKQQLCLDAGNDRDWLRKVRPWFQHRAHMHVRLRCPADSLECEDQPLPPPGDGCGAELQSWFEPPKPGTTKPEKKTPPPLPPSCQALLDEHVL.

The signal sequence occupies residues 1–19 (MKKTAIALLAWFVSSASLA). 3 cysteine pairs are disulfide-bonded: Cys44/Cys265, Cys187/Cys235, and Cys216/Cys223. His110, His113, Asp120, Asp147, His150, and His211 together coordinate Zn(2+). The segment at 225–274 (DQPLPPPGDGCGAELQSWFEPPKPGTTKPEKKTPPPLPPSCQALLDEHVL) is disordered.

Belongs to the peptidase M74 family. In terms of assembly, dimer. It depends on Zn(2+) as a cofactor.

Its subcellular location is the periplasm. In terms of biological role, murein endopeptidase that cleaves the D-alanyl-meso-2,6-diamino-pimelyl amide bond that connects peptidoglycan strands. Likely plays a role in the removal of murein from the sacculus. This Salmonella agona (strain SL483) protein is Penicillin-insensitive murein endopeptidase.